A 192-amino-acid chain; its full sequence is Peptide deformylase (192 aa).

2 residues coordinate Fe cation: C102 and H145. E146 is an active-site residue. H149 provides a ligand contact to Fe cation.

This sequence belongs to the polypeptide deformylase family. Fe(2+) serves as cofactor.

It carries out the reaction N-terminal N-formyl-L-methionyl-[peptide] + H2O = N-terminal L-methionyl-[peptide] + formate. Removes the formyl group from the N-terminal Met of newly synthesized proteins. Requires at least a dipeptide for an efficient rate of reaction. N-terminal L-methionine is a prerequisite for activity but the enzyme has broad specificity at other positions. The sequence is that of Peptide deformylase from Thermus thermophilus (strain ATCC BAA-163 / DSM 7039 / HB27).